Consider the following 1091-residue polypeptide: MAALAGEDKDVDAFLADCTASGDAAYGAAKAVLERLHAPATRPAARRLLGAVRRRFAASRAAGEDCFRTFHFRIHDVVLDPHVQGFQQMKKLTMMEIPSIFIPEDWSFTFYEGLNRHPDSIFRDKTVAELGCGNGWISIALAEKWCPSKVYGLDINPRAVKIAWINLYLNALDDDGLPIYDGEGKTLLDRVEFYESDLLSYCRDNKIELDRIVGCIPQILNPNPEAMSKIVTENSSEEFLYALSNYCALQGFVEDQFGLGLIARAVEEGISVIKPSGIMVFNMGGRPGQGVCERLFRRRGFRITKLWQTKIMQXADTDISALVEXEKNSRHRFEFFMDLVGBQPICARTAWAYMKSGGHISHALSVYSCQLRQPNQVKKIFEFLKDGFHEVSSSLDLSFDDDSVAEEKIPFLAYLASFLKENKSNPCEPPAGCLNFRKLVAGFMKSYHHIPLTPDNVVVFPSRSVAIENALQLFSPALAIVDEHLTRHLPKQWLTSLAIEGRADCNHADGTVTVIEAPRQSDLLIELIRKLQPQVVVTGMAQFEAITSAAFENLLNVTKDVGSRLFLDISEHLELSSLPSSNGVLKYLAGKTLPSHAAILCGLVKNQVYSDLEVAFAISEDAAVYKALSQTIELLEGHTSLISQHYYGCLFHELLAFQIADRHPQQERQPAEVIPQQMIGFSDPAVSTLKATEFFVPGSAESSIIHMDLDRSFLPVPSAVNASVFESFVRQNITDSETDVRSSIQQLVKDSYGLSAAGCAEIIYGNTSVALFNKLVLCCMQEQGTLLFPLGTNGHYVSAAKFVNASTVTIPTNPSSGFRIEPKVLADTLKNVSRPWVYVCGPTINPTGFLYSDSDIRELLSVCAEYGARVVIDTSFSGLEYETDGWRQWNLAGCLSSLKRSEPSFSVVLLGELSFALTAGGHDFGFVILGDSSLAETFHSFSSLSRPHTTLKYTFKKLLGLKNQKDQHFSDLIVEQKEELKNRANQLIQTLESCGWEAAIGCGGISMLAKPTAYMGKAFKAAGFDGELDASNIREAILRATGLCINSSSWTGIPGYCRFSFALERGEFERAMGCIARFKELVLGGAQMNGA.

It belongs to the class I-like SAM-binding methyltransferase superfamily. In terms of assembly, homotetramer.

The protein resides in the cytoplasm. It catalyses the reaction L-methionine + S-adenosyl-L-methionine = S-methyl-L-methionine + S-adenosyl-L-homocysteine. Its function is as follows. Catalyzes the S-methylmethionine (SMM) biosynthesis from adenosyl-L-homocysteine (AdoMet) and methionine. SMM biosynthesis (by MMT1) and degradation (by HMT-1, HMT-2 and HMT-3) constitute the SMM cycle in plants, which is probably required to achieve short term control of AdoMet level. Also able to catalyze the selenium-methylmethionine (SeMM) from AdoMet and selenium-methionine (SeMet). May play a role in phoem sulfur transport; such function is however not essential. The polypeptide is Methionine S-methyltransferase (MMT1) (Zea mays (Maize)).